The chain runs to 85 residues: Small ribosomal subunit protein uS17 (85 aa).

This sequence belongs to the universal ribosomal protein uS17 family. As to quaternary structure, part of the 30S ribosomal subunit.

Functionally, one of the primary rRNA binding proteins, it binds specifically to the 5'-end of 16S ribosomal RNA. This is Small ribosomal subunit protein uS17 from Desulfosudis oleivorans (strain DSM 6200 / JCM 39069 / Hxd3) (Desulfococcus oleovorans).